We begin with the raw amino-acid sequence, 361 residues long: Aminomethyltransferase (361 aa).

It belongs to the GcvT family. In terms of assembly, the glycine cleavage system is composed of four proteins: P, T, L and H.

It carries out the reaction N(6)-[(R)-S(8)-aminomethyldihydrolipoyl]-L-lysyl-[protein] + (6S)-5,6,7,8-tetrahydrofolate = N(6)-[(R)-dihydrolipoyl]-L-lysyl-[protein] + (6R)-5,10-methylene-5,6,7,8-tetrahydrofolate + NH4(+). In terms of biological role, the glycine cleavage system catalyzes the degradation of glycine. The chain is Aminomethyltransferase from Bacteroides thetaiotaomicron (strain ATCC 29148 / DSM 2079 / JCM 5827 / CCUG 10774 / NCTC 10582 / VPI-5482 / E50).